We begin with the raw amino-acid sequence, 137 residues long: Large ribosomal subunit protein uL16 (137 aa).

The protein belongs to the universal ribosomal protein uL16 family. Part of the 50S ribosomal subunit.

Functionally, binds 23S rRNA and is also seen to make contacts with the A and possibly P site tRNAs. The polypeptide is Large ribosomal subunit protein uL16 (Alcanivorax borkumensis (strain ATCC 700651 / DSM 11573 / NCIMB 13689 / SK2)).